A 1073-amino-acid chain; its full sequence is Lon protease homolog, mitochondrial (1073 aa).

The transit peptide at 1-27 (MIKASKCNKARALFLVRTSIPRTFIRN) directs the protein to the mitochondrion. Basic and acidic residues-rich tracts occupy residues 69 to 107 (FDSK…RKDI) and 113 to 123 (YDIKEETDSKP). The tract at residues 69-173 (FDSKKEKQPS…DKEFLSPSDA (105 aa)) is disordered. Residues 132 to 150 (SSKSSISSSSGGANNNNNN) show a composition bias toward low complexity. Over residues 158–167 (DDGSPKDKEF) the composition is skewed to basic and acidic residues. Residues 177–395 (PPFLAIAMKD…LSLQLLQVEA (219 aa)) form the Lon N-terminal domain. 543–550 (GPPGTGKT) provides a ligand contact to ATP. Basic and acidic residues predominate over residues 775-785 (SVISDKAKKDA). The segment at 775–821 (SVISDKAKKDAGSSSIESNDSNTEAKVSTTTENEKKQEQKQKQDEEI) is disordered. Residues 790–805 (IESNDSNTEAKVSTTT) are compositionally biased toward polar residues. Over residues 806–821 (ENEKKQEQKQKQDEEI) the composition is skewed to basic and acidic residues. The Lon proteolytic domain occupies 856 to 1044 (TLNPGVATGL…SEVFEHLFKG (189 aa)). Catalysis depends on residues S950 and K993.

The protein belongs to the peptidase S16 family. As to quaternary structure, homohexamer or homoheptamer. Organized in a ring with a central cavity.

The protein resides in the mitochondrion matrix. It catalyses the reaction Hydrolysis of proteins in presence of ATP.. Functionally, ATP-dependent serine protease that mediates the selective degradation of misfolded, unassembled or oxidatively damaged polypeptides as well as certain short-lived regulatory proteins in the mitochondrial matrix. May also have a chaperone function in the assembly of inner membrane protein complexes. Participates in the regulation of mitochondrial gene expression and in the maintenance of the integrity of the mitochondrial genome. Binds to mitochondrial DNA in a site-specific manner. The protein is Lon protease homolog, mitochondrial of Candida dubliniensis (strain CD36 / ATCC MYA-646 / CBS 7987 / NCPF 3949 / NRRL Y-17841) (Yeast).